The sequence spans 228 residues: Ankyrin repeat domain-containing protein 46 (228 aa).

4 ANK repeats span residues Q11–I40, R44–A73, Q77–I103, and N107–G138. Residues V195–G215 traverse the membrane as a helical segment.

It localises to the membrane. The sequence is that of Ankyrin repeat domain-containing protein 46 (ankrd46) from Danio rerio (Zebrafish).